The chain runs to 722 residues: Golgin subfamily A member 5 (722 aa).

The Cytoplasmic segment spans residues 1 to 689 (MSWFTDLAGR…IFLRRYPIAR (689 aa)). Disordered stretches follow at residues 90-158 (TRSS…VKPI) and 194-215 (TLSD…SHEL). The segment covering 91 to 109 (RSSIESSHNSSVNVSSHRS) has biased composition (low complexity). Basic and acidic residues predominate over residues 134-148 (DKVHSSSQKETRKES). The span at 149–158 (ASVNQAVKPI) shows a compositional bias: polar residues. The span at 195-209 (LSDSGSSASLSTTGD) shows a compositional bias: low complexity. The stretch at 211 to 622 (KSHELSNLRL…LEHQLKNVQG (412 aa)) forms a coiled coil. The chain crosses the membrane as a helical; Anchor for type IV membrane protein span at residues 690-710 (VFIIIYMALLHLWVMIVLLTY). The Lumenal segment spans residues 711-722 (TPEMHHDTPSGK).

The protein resides in the golgi apparatus membrane. Its function is as follows. Involved in maintaining Golgi structure. Stimulates the formation of Golgi stacks and ribbons. Involved in intra-Golgi retrograde transport. This chain is Golgin subfamily A member 5 (golga5), found in Xenopus laevis (African clawed frog).